A 346-amino-acid polypeptide reads, in one-letter code: [LysW]-lysine/[LysW]-ornithine hydrolase (346 aa).

His68 contacts Zn(2+). The active site involves Asp70. Asp92 contributes to the Zn(2+) binding site. Catalysis depends on Glu122, which acts as the Proton acceptor. Zn(2+) contacts are provided by Glu123, Glu146, and His317.

Belongs to the peptidase M20A family. LysK subfamily. Zn(2+) is required as a cofactor. The cofactor is Co(2+).

It is found in the cytoplasm. The enzyme catalyses [amino-group carrier protein]-C-terminal-gamma-(L-lysyl)-L-glutamate + H2O = [amino-group carrier protein]-C-terminal-L-glutamate + L-lysine. The catalysed reaction is [amino-group carrier protein]-C-terminal-gamma-(L-ornithyl)-L-glutamate + H2O = [amino-group carrier protein]-C-terminal-L-glutamate + L-ornithine. It functions in the pathway amino-acid biosynthesis; L-lysine biosynthesis via AAA pathway; L-lysine from L-alpha-aminoadipate (Thermus route): step 5/5. Its pathway is amino-acid biosynthesis; L-arginine biosynthesis. In terms of biological role, catalyzes the release of L-lysine from [LysW]-gamma-L-lysine and the release of L-ornithine from [LysW]-L-ornithine. The chain is [LysW]-lysine/[LysW]-ornithine hydrolase from Saccharolobus solfataricus (strain ATCC 35092 / DSM 1617 / JCM 11322 / P2) (Sulfolobus solfataricus).